A 262-amino-acid chain; its full sequence is Sugar fermentation stimulation protein homolog (262 aa).

Belongs to the SfsA family.

This is Sugar fermentation stimulation protein homolog from Lawsonia intracellularis (strain PHE/MN1-00).